Reading from the N-terminus, the 83-residue chain is Small ribosomal subunit protein bS16 (83 aa).

It belongs to the bacterial ribosomal protein bS16 family.

The sequence is that of Small ribosomal subunit protein bS16 from Pseudomonas putida (strain ATCC 700007 / DSM 6899 / JCM 31910 / BCRC 17059 / LMG 24140 / F1).